The chain runs to 21 residues: Fibrinogen beta chain (21 aa).

Gln-1 carries the post-translational modification Pyrrolidone carboxylic acid. A compositionally biased stretch (acidic residues) spans 1-11 (QPSYDYDEEED). Positions 1-21 (QPSYDYDEEEDDRAKLRLDAR) are disordered. Tyr-6 carries the post-translational modification Sulfotyrosine. The segment covering 12–21 (DRAKLRLDAR) has biased composition (basic and acidic residues).

As to quaternary structure, heterohexamer; disulfide linked. Contains 2 sets of 3 non-identical chains (alpha, beta and gamma). The 2 heterotrimers are in head to head conformation with the N-termini in a small central domain. In terms of processing, conversion of fibrinogen to fibrin is triggered by thrombin, which cleaves fibrinopeptides A and B from alpha and beta chains, and thus exposes the N-terminal polymerization sites responsible for the formation of the soft clot.

It localises to the secreted. In terms of biological role, cleaved by the protease thrombin to yield monomers which, together with fibrinogen alpha (FGA) and fibrinogen gamma (FGG), polymerize to form an insoluble fibrin matrix. Fibrin has a major function in hemostasis as one of the primary components of blood clots. In addition, functions during the early stages of wound repair to stabilize the lesion and guide cell migration during re-epithelialization. Was originally thought to be essential for platelet aggregation, based on in vitro studies using anticoagulated blood. However subsequent studies have shown that it is not absolutely required for thrombus formation in vivo. Enhances expression of SELP in activated platelets. Maternal fibrinogen is essential for successful pregnancy. Fibrin deposition is also associated with infection, where it protects against IFNG-mediated hemorrhage. May also facilitate the antibacterial immune response via both innate and T-cell mediated pathways. This is Fibrinogen beta chain (FGB) from Antilocapra americana (Pronghorn).